We begin with the raw amino-acid sequence, 137 residues long: Nucleoside diphosphate kinase (137 aa).

Residues lysine 10, phenylalanine 59, arginine 87, threonine 93, arginine 104, and asparagine 114 each coordinate ATP. Catalysis depends on histidine 117, which acts as the Pros-phosphohistidine intermediate.

The protein belongs to the NDK family. Homotetramer. Requires Mg(2+) as cofactor.

The protein localises to the cytoplasm. The catalysed reaction is a 2'-deoxyribonucleoside 5'-diphosphate + ATP = a 2'-deoxyribonucleoside 5'-triphosphate + ADP. The enzyme catalyses a ribonucleoside 5'-diphosphate + ATP = a ribonucleoside 5'-triphosphate + ADP. Major role in the synthesis of nucleoside triphosphates other than ATP. The ATP gamma phosphate is transferred to the NDP beta phosphate via a ping-pong mechanism, using a phosphorylated active-site intermediate. This is Nucleoside diphosphate kinase from Streptomyces griseus subsp. griseus (strain JCM 4626 / CBS 651.72 / NBRC 13350 / KCC S-0626 / ISP 5235).